A 60-amino-acid chain; its full sequence is Sperm protamine P1 (60 aa).

Residues 1 to 60 (MARYRHSRSRSRSRYRRRRRRRSRYRSRRRRXRRRRRSRRGRRRRGYSRRRYSRRRRRRY) are disordered.

This sequence belongs to the protamine P1 family. As to expression, testis.

The protein resides in the nucleus. The protein localises to the chromosome. In terms of biological role, protamines substitute for histones in the chromatin of sperm during the haploid phase of spermatogenesis. They compact sperm DNA into a highly condensed, stable and inactive complex. The sequence is that of Sperm protamine P1 (PRM1) from Petrogale concinna (Nabarlek).